The chain runs to 629 residues: Methyl-accepting chemotaxis protein PctB (629 aa).

The Cytoplasmic segment spans residues 1–10; sequence MIKSLKFSHK. A helical transmembrane segment spans residues 11–31; it reads ILLAAALVVIATFSLFTLYND. Topologically, residues 32–276 are periplasmic; it reads SLQRASIRED…AYAMLTKLRT (245 aa). The Cache domain maps to 37–260; the sequence is SIREDLEDYL…LSGLDWYIGI (224 aa). L-arginine-binding positions include Tyr-109, Ser-115, Tyr-121, 126 to 128, Glu-146, and Asp-173; that span reads RPW. Residues Ser-115, Tyr-121, 126–128, 144–146, and Asp-173 contribute to the L-glutamine site; these read RPW and YME. A helical membrane pass occupies residues 277-297; sequence SAIVAALIAVVAIVLLLGMLI. An HAMP domain is found at 298–352; that stretch reads RVLMQPLTDMGRAMQDIAQGEGDLTKRLKVTSNDEFGALAISFNRFVERIHESIR. Residues 298 to 629 are Cytoplasmic-facing; sequence RVLMQPLTDM…LRQLVDSFKI (332 aa). A Methyl-accepting transducer domain is found at 357-593; the sequence is TARQLHDVAQ…SLNMDITEIN (237 aa). The interval 405–424 is disordered; it reads RNAADASHHASDANHQAEDG. Residues 410-424 show a composition bias toward basic and acidic residues; that stretch reads ASHHASDANHQAEDG.

It belongs to the methyl-accepting chemotaxis (MCP) protein family. In terms of assembly, monomer in the absence and presence of ligands.

The protein localises to the cell inner membrane. Its function is as follows. Chemotactic-signal transducers respond to changes in the concentration of attractants and repellents in the environment, transduce a signal from the outside to the inside of the cell, and facilitate sensory adaptation through the variation of the level of methylation. Responds to L-Arg, L-Gln, L-Ala, L-Glu, L-Lys, L-Met and L-Tyr. Also involved in repellent responses to trichloroethylene (TCE), chloroform and methylthiocyanate. This chain is Methyl-accepting chemotaxis protein PctB (pctB), found in Pseudomonas aeruginosa (strain ATCC 15692 / DSM 22644 / CIP 104116 / JCM 14847 / LMG 12228 / 1C / PRS 101 / PAO1).